A 514-amino-acid polypeptide reads, in one-letter code: Maturase K (514 aa).

Belongs to the intron maturase 2 family. MatK subfamily.

Its subcellular location is the plastid. The protein localises to the chloroplast. Usually encoded in the trnK tRNA gene intron. Probably assists in splicing its own and other chloroplast group II introns. This is Maturase K from Encephalartos altensteinii (Altenstein's bread tree).